Reading from the N-terminus, the 424-residue chain is Magnesium-chelatase subunit ChlI-1, chloroplastic (424 aa).

The transit peptide at 1–60 directs the protein to the chloroplast; the sequence is MASLLGTSSSAIWASPSLSSPSSKPSSSPICFRPGKLFGSKLNAGIQIRPKKNRSRYHVS. V61 carries the N-acetylvaline modification. 2 disulfides stabilise this stretch: C102-C193 and C354-C396. 119-126 contacts ATP; it reads GDRGTGKS. S355 bears the Phosphoserine mark.

The protein belongs to the Mg-chelatase subunits D/I family. As to quaternary structure, the magnesium chelatase complex is a heterotrimer consisting of subunits CHLI, CHLD and CHLH. Interacts with CHLH and CHLD.

Its subcellular location is the plastid. The protein localises to the chloroplast. The catalysed reaction is protoporphyrin IX + Mg(2+) + ATP + H2O = Mg-protoporphyrin IX + ADP + phosphate + 3 H(+). It participates in porphyrin-containing compound metabolism; chlorophyll biosynthesis. Its activity is regulated as follows. Redox regulation; active in reducing conditions, inactive in oxidizing conditions. Thioredoxins f and m mediate the reversible reductive activation of oxidized CHLI1. Functionally, involved in chlorophyll biosynthesis. Catalyzes the insertion of magnesium ion into protoporphyrin IX to yield Mg-protoporphyrin IX. The magnesium-chelatase is a complex of three subunits, CHLI, CHLD and CHLH. The reaction takes place in two steps, with an ATP-dependent activation followed by an ATP-dependent chelation step. Possesses high affinity for ATP and may play a major role in chlorophyll biosynthesis. Does not bind abscisic acid (ABA), but is a positive regulator of ABA signaling. May be involved in ABA signaling in the control of stomatal aperture, but does not seem to have an effect on ABA-induced gene expression. This chain is Magnesium-chelatase subunit ChlI-1, chloroplastic (CHLI1), found in Arabidopsis thaliana (Mouse-ear cress).